We begin with the raw amino-acid sequence, 941 residues long: Gamma-aminobutyric acid type B receptor subunit 2 (941 aa).

The signal sequence occupies residues 1–41 (MASPRSSGQPGPPPPPPPPPARLLLLLLLPLLLPLAPGAWG). Topologically, residues 42–483 (WARGAPRPPP…LRKISLPLYS (442 aa)) are extracellular. Residue Asn-90 is glycosylated (N-linked (GlcNAc...) asparagine). Cystine bridges form between Cys-108-Cys-135, Cys-237-Cys-266, and Cys-265-Cys-302. Residues Asn-298, Asn-389, Asn-404, and Asn-453 are each glycosylated (N-linked (GlcNAc...) asparagine). The chain crosses the membrane as a helical span at residues 484 to 504 (ILSALTILGMIMASAFLFFNI). Residues 505–522 (KNRNQKLIKMSSPYMNNL) are Cytoplasmic-facing. The chain crosses the membrane as a helical span at residues 523 to 543 (IILGGMLSYASIFLFGLDGSF). Residues 544-551 (VSEKTFET) are Extracellular-facing. Residues 552 to 572 (LCTVRTWILTVGYTTAFGAMF) traverse the membrane as a helical segment. Residues 573–597 (AKTWRVHAIFKNVKMKKKIIKDQKL) are Cytoplasmic-facing. A helical membrane pass occupies residues 598–618 (LVIVGGMLLIDLCILICWQAV). The Extracellular segment spans residues 619-654 (DPLRRTVEKYSMEPDPAGRDISIRPLLEHCENTHMT). The chain crosses the membrane as a helical span at residues 655 to 675 (IWLGIVYAYKGLLMLFGCFLA). Residues 676-691 (WETRNVSIPALNDSKY) lie on the Cytoplasmic side of the membrane. Residues 692-712 (IGMSVYNVGIMCIIGAAVSFL) form a helical membrane-spanning segment. Residues 713–720 (TRDQPNVQ) are Extracellular-facing. The chain crosses the membrane as a helical span at residues 721-741 (FCIVALVIIFCSTITLCLVFV). Topologically, residues 742 to 941 (PKLITLRTNP…PSFRVMVSGL (200 aa)) are cytoplasmic. Residues 763 to 790 (TQNQKKEDSKTSTSVTSVNQASTSRLEG) form a disordered region. A compositionally biased stretch (polar residues) spans 773–787 (TSTSVTSVNQASTSR). Phosphoserine is present on residues Ser-776 and Ser-779. Residues 781-819 (NQASTSRLEGLQSENHRLRMKITELDKDLEEVTMQLQDT) are a coiled coil. Position 819 is a phosphothreonine (Thr-819). Residues Ser-884, Ser-893, Ser-913, Ser-916, Ser-920, and Ser-924 each carry the phosphoserine modification.

It belongs to the G-protein coupled receptor 3 family. GABA-B receptor subfamily. Heterodimer of GABBR1 and GABBR2. Homodimers may form, but are inactive. Interacts (via C-terminus) with ATF4 (via leucine zipper domain). As to expression, highly expressed in brain, especially in cerebral cortex, thalamus, hippocampus, frontal, occipital and temporal lobe, occipital pole and cerebellum, followed by corpus callosum, caudate nucleus, spinal cord, amygdala and medulla. Weakly expressed in heart, testis and skeletal muscle.

Its subcellular location is the cell membrane. It localises to the postsynaptic cell membrane. Its function is as follows. Component of a heterodimeric G-protein coupled receptor for GABA, formed by GABBR1 and GABBR2. Within the heterodimeric GABA receptor, only GABBR1 seems to bind agonists, while GABBR2 mediates coupling to G proteins. Ligand binding causes a conformation change that triggers signaling via guanine nucleotide-binding proteins (G proteins) and modulates the activity of down-stream effectors, such as adenylate cyclase. Signaling inhibits adenylate cyclase, stimulates phospholipase A2, activates potassium channels, inactivates voltage-dependent calcium-channels and modulates inositol phospholipid hydrolysis. Plays a critical role in the fine-tuning of inhibitory synaptic transmission. Pre-synaptic GABA receptor inhibits neurotransmitter release by down-regulating high-voltage activated calcium channels, whereas postsynaptic GABA receptor decreases neuronal excitability by activating a prominent inwardly rectifying potassium (Kir) conductance that underlies the late inhibitory postsynaptic potentials. Not only implicated in synaptic inhibition but also in hippocampal long-term potentiation, slow wave sleep, muscle relaxation and antinociception. This is Gamma-aminobutyric acid type B receptor subunit 2 (GABBR2) from Homo sapiens (Human).